The chain runs to 330 residues: DNA-directed RNA polymerase subunit alpha (330 aa).

The alpha N-terminal domain (alpha-NTD) stretch occupies residues 1–232; it reads MAILAFQKPD…YHFMLFSDEK (232 aa). An alpha C-terminal domain (alpha-CTD) region spans residues 248–330; the sequence is EEVLHMRQLL…DISKYKLDKE (83 aa).

This sequence belongs to the RNA polymerase alpha chain family. Homodimer. The RNAP catalytic core consists of 2 alpha, 1 beta, 1 beta' and 1 omega subunit. When a sigma factor is associated with the core the holoenzyme is formed, which can initiate transcription.

The catalysed reaction is RNA(n) + a ribonucleoside 5'-triphosphate = RNA(n+1) + diphosphate. DNA-dependent RNA polymerase catalyzes the transcription of DNA into RNA using the four ribonucleoside triphosphates as substrates. This chain is DNA-directed RNA polymerase subunit alpha, found in Bacteroides fragilis (strain ATCC 25285 / DSM 2151 / CCUG 4856 / JCM 11019 / LMG 10263 / NCTC 9343 / Onslow / VPI 2553 / EN-2).